The primary structure comprises 972 residues: UvrABC system protein A (972 aa).

32–39 (GLSGSGKS) is a binding site for ATP. The C4-type; atypical zinc finger occupies 257-285 (CPNGHALAVDDLEPRSFSFNSPYGACPEC). ABC transporter domains lie at 315-601 (WSNG…KDSI) and 621-950 (VDPR…KFLA). Residue 654 to 661 (GVSGSGKS) coordinates ATP. The C4-type zinc finger occupies 753-779 (CEACTGDGTIKIEMNFLPDVYVPCEVC).

The protein belongs to the ABC transporter superfamily. UvrA family. In terms of assembly, forms a heterotetramer with UvrB during the search for lesions.

Its subcellular location is the cytoplasm. Its function is as follows. The UvrABC repair system catalyzes the recognition and processing of DNA lesions. UvrA is an ATPase and a DNA-binding protein. A damage recognition complex composed of 2 UvrA and 2 UvrB subunits scans DNA for abnormalities. When the presence of a lesion has been verified by UvrB, the UvrA molecules dissociate. The chain is UvrABC system protein A from Mycobacterium bovis (strain ATCC BAA-935 / AF2122/97).